The sequence spans 492 residues: NADH-quinone oxidoreductase subunit N (492 aa).

14 helical membrane-spanning segments follow: residues 13–33 (MMTPEFIVLGTALILSLMDLF), 42–62 (PLAWIAFVGVAIALIATIGLI), 79–99 (FGKAFKLLLLAGGALSLLLAF), 111–131 (GEFYYLLLCALLGAMIMASSG), 133–153 (LITLFVGLELLSISSYILAGI), 168–188 (VINGGISTAITLFGMSYIFGL), 211–231 (YILAIAFLMMLVGLSFKISSV), 251–271 (FLSVVSKTAGFVIVLRLFITI), 284–304 (SLLFSMQDYIAFLAGATMIIG), 318–340 (FAYSSIAHAGYILVGFAAMSWVM), 344–366 (IWFYLLAYLFMNLGAFAILQRIS), 388–408 (AVAMGIFLLSLAGIPGTAGFI), 426–446 (VLAAVMIATTVVSYVYYFGIF), and 463–483 (PIGLAMVVVLCALGTLLFGVV).

The protein belongs to the complex I subunit 2 family. As to quaternary structure, NDH-1 is composed of 14 different subunits. Subunits NuoA, H, J, K, L, M, N constitute the membrane sector of the complex.

It is found in the cell membrane. It catalyses the reaction a quinone + NADH + 5 H(+)(in) = a quinol + NAD(+) + 4 H(+)(out). NDH-1 shuttles electrons from NADH, via FMN and iron-sulfur (Fe-S) centers, to quinones in the respiratory chain. The immediate electron acceptor for the enzyme in this species is believed to be a menaquinone. Couples the redox reaction to proton translocation (for every two electrons transferred, four hydrogen ions are translocated across the cytoplasmic membrane), and thus conserves the redox energy in a proton gradient. The protein is NADH-quinone oxidoreductase subunit N of Geobacillus sp. (strain WCH70).